Reading from the N-terminus, the 737-residue chain is Photosystem I P700 chlorophyll a apoprotein A2 (737 aa).

The next 8 helical transmembrane spans lie at 46–69 (IFAS…FHVA), 135–158 (LYNG…LHLQ), 175–199 (LNHH…HVAI), 273–291 (IAHH…GHMY), 330–353 (LHFQ…QHMY), 369–395 (AALY…IFLV), 417–439 (AIIS…LYVH), and 520–538 (FLVH…LILV). The [4Fe-4S] cluster site is built by Cys562 and Cys571. The next 2 membrane-spanning stretches (helical) occupy residues 578 to 599 (AFYL…YWHW) and 646 to 668 (LSVW…MFLI). His657, Met665, and Tyr673 together coordinate chlorophyll a. A phylloquinone-binding site is contributed by Trp674. The chain crosses the membrane as a helical span at residues 710 to 730 (LVGLAHFAVGYIVTYAAFLIA).

This sequence belongs to the PsaA/PsaB family. In terms of assembly, the PsaA/B heterodimer binds the P700 chlorophyll special pair and subsequent electron acceptors. PSI consists of a core antenna complex that captures photons, and an electron transfer chain that converts photonic excitation into a charge separation. The eukaryotic PSI reaction center is composed of at least 11 subunits. P700 is a chlorophyll a/chlorophyll a' dimer, A0 is one or more chlorophyll a, A1 is one or both phylloquinones and FX is a shared 4Fe-4S iron-sulfur center. serves as cofactor.

It localises to the plastid. The protein localises to the cyanelle thylakoid membrane. The enzyme catalyses reduced [plastocyanin] + hnu + oxidized [2Fe-2S]-[ferredoxin] = oxidized [plastocyanin] + reduced [2Fe-2S]-[ferredoxin]. Functionally, psaA and PsaB bind P700, the primary electron donor of photosystem I (PSI), as well as the electron acceptors A0, A1 and FX. PSI is a cytochrome c6-ferredoxin oxidoreductase, converting photonic excitation into a charge separation, which transfers an electron from the donor P700 chlorophyll pair to the spectroscopically characterized acceptors A0, A1, FX, FA and FB in turn. Oxidized P700 is reduced on the lumenal side of the thylakoid membrane by cytochrome c6. The sequence is that of Photosystem I P700 chlorophyll a apoprotein A2 from Cyanophora paradoxa.